The primary structure comprises 80 residues: Large ribosomal subunit protein bL31B (80 aa).

This sequence belongs to the bacterial ribosomal protein bL31 family. Type B subfamily. As to quaternary structure, part of the 50S ribosomal subunit.

This is Large ribosomal subunit protein bL31B from Oenococcus oeni (strain ATCC BAA-331 / PSU-1).